A 390-amino-acid chain; its full sequence is 5-hydroxytryptamine receptor 1B (390 aa).

At 1 to 46 the chain is on the extracellular side; sequence MEEPGAQCAPPPPAGSETWVPQANLSSAPSQNCSAKDYIYQDSISL. N-linked (GlcNAc...) asparagine glycans are attached at residues N24 and N32. A helical transmembrane segment spans residues 47–72; sequence PWKVLLVMLLALITLATTLSNAFVIA. Residues 73-86 lie on the Cytoplasmic side of the membrane; sequence TVYRTRKLHTPANY. Residues 87–111 traverse the membrane as a helical segment; sequence LIASLAVTDLLVSILVMPISTMYTV. Residues 112 to 119 are Extracellular-facing; the sequence is TGRWTLGQ. Residues 120-145 traverse the membrane as a helical segment; it reads VVCDFWLSSDITCCTASILHLCVIAL. C122 and C199 are oxidised to a cystine. The ergotamine site is built by D129 and T134. Residues 146-148 carry the DRY motif; important for ligand-induced conformation changes and signaling motif; it reads DRY. At 146–165 the chain is on the cytoplasmic side; the sequence is DRYWAITDAVEYSAKRTPKR. The helical transmembrane segment at 166-184 threads the bilayer; it reads AAVMIALVWVFSISISLPP. Topologically, residues 185 to 205 are extracellular; that stretch reads FFWRQAKAEEEVSECVVNTDH. V201 is an ergotamine binding site. The helical transmembrane segment at 206–229 threads the bilayer; that stretch reads ILYTVYSTVGAFYFPTLLLIALYG. Residues 230-315 are Cytoplasmic-facing; the sequence is RIYVEARSRI…AARERKATKT (86 aa). Residues 259-272 show a composition bias toward polar residues; sequence DSPGSTSSVTSINS. Residues 259–281 are disordered; it reads DSPGSTSSVTSINSRVPDVPSES. A helical membrane pass occupies residues 316-337; sequence LGIILGAFIVCWLPFFIISLVM. Over 338-347 the chain is Extracellular; sequence PICKDACWFH. The chain crosses the membrane as a helical span at residues 348–370; the sequence is LAIFDFFTWLGYLNSLINPIIYT. The NPxxY motif; important for ligand-induced conformation changes and signaling signature appears at 365–369; the sequence is NPIIY. The Cytoplasmic portion of the chain corresponds to 371–390; it reads MSNEDFKQAFHKLIRFKCTS. A lipid anchor (S-palmitoyl cysteine) is attached at C388.

The protein belongs to the G-protein coupled receptor 1 family. Homodimer. Heterodimer with HTR1D. In terms of processing, phosphorylated. Desensitization of the receptor may be mediated by its phosphorylation. Post-translationally, palmitoylated. Detected in cerebral artery smooth muscle cells (at protein level). Detected in brain cortex, striatum, amygdala, medulla, hippocampus, caudate nucleus and putamen.

The protein resides in the cell membrane. G-protein coupled receptor for 5-hydroxytryptamine (serotonin). Also functions as a receptor for ergot alkaloid derivatives, various anxiolytic and antidepressant drugs and other psychoactive substances, such as lysergic acid diethylamide (LSD). Ligand binding causes a conformation change that triggers signaling via guanine nucleotide-binding proteins (G proteins) and modulates the activity of downstream effectors, such as adenylate cyclase. HTR1B is coupled to G(i)/G(o) G alpha proteins and mediates inhibitory neurotransmission by inhibiting adenylate cyclase activity. Arrestin family members inhibit signaling via G proteins and mediate activation of alternative signaling pathways. Regulates the release of 5-hydroxytryptamine, dopamine and acetylcholine in the brain, and thereby affects neural activity, nociceptive processing, pain perception, mood and behavior. Besides, plays a role in vasoconstriction of cerebral arteries. The polypeptide is 5-hydroxytryptamine receptor 1B (Homo sapiens (Human)).